The chain runs to 142 residues: Large ribosomal subunit protein uL11 (142 aa).

This sequence belongs to the universal ribosomal protein uL11 family. Part of the ribosomal stalk of the 50S ribosomal subunit. Interacts with L10 and the large rRNA to form the base of the stalk. L10 forms an elongated spine to which L12 dimers bind in a sequential fashion forming a multimeric L10(L12)X complex. In terms of processing, one or more lysine residues are methylated.

Functionally, forms part of the ribosomal stalk which helps the ribosome interact with GTP-bound translation factors. The sequence is that of Large ribosomal subunit protein uL11 from Mycobacterium leprae (strain Br4923).